The primary structure comprises 445 residues: GTPase Der (445 aa).

EngA-type G domains follow at residues 3-166 and 180-353; these read PVIA…AERV and IRIG…ESCY. GTP-binding positions include 9-16, 56-60, 118-121, 186-193, 233-237, and 298-301; these read GRPNVGKS, DTGGI, NKTD, DTAGI, and NKWD. The 85-residue stretch at 354 to 438 folds into the KH-like domain; the sequence is AKWTTNRLTR…PIIFEFKSAE (85 aa).

Belongs to the TRAFAC class TrmE-Era-EngA-EngB-Septin-like GTPase superfamily. EngA (Der) GTPase family. Associates with the 50S ribosomal subunit.

Its function is as follows. GTPase that plays an essential role in the late steps of ribosome biogenesis. The protein is GTPase Der of Marinomonas sp. (strain MWYL1).